The chain runs to 261 residues: Zinc import ATP-binding protein ZnuC (261 aa).

Residues 6–227 enclose the ABC transporter domain; sequence IQLNNIHLRF…PEYLKLFGKQ (222 aa). Residue 38-45 participates in ATP binding; it reads GPNGAGKS.

It belongs to the ABC transporter superfamily. Zinc importer (TC 3.A.1.15.5) family. The complex is composed of two ATP-binding proteins (ZnuC), two transmembrane proteins (ZnuB) and a solute-binding protein (ZnuA).

It is found in the cell inner membrane. The enzyme catalyses Zn(2+)(out) + ATP(in) + H2O(in) = Zn(2+)(in) + ADP(in) + phosphate(in) + H(+)(in). Its function is as follows. Part of the ABC transporter complex ZnuABC involved in zinc import. Responsible for energy coupling to the transport system. In Saccharophagus degradans (strain 2-40 / ATCC 43961 / DSM 17024), this protein is Zinc import ATP-binding protein ZnuC.